The chain runs to 349 residues: tRNA pseudouridine synthase D (349 aa).

Substrate is bound at residue phenylalanine 27. Aspartate 80 serves as the catalytic Nucleophile. Asparagine 129 is a substrate binding site. The TRUD domain occupies 155 to 303 (GVPNYFGAQR…VEAARRAMLL (149 aa)). A substrate-binding site is contributed by phenylalanine 329.

It belongs to the pseudouridine synthase TruD family.

It carries out the reaction uridine(13) in tRNA = pseudouridine(13) in tRNA. In terms of biological role, responsible for synthesis of pseudouridine from uracil-13 in transfer RNAs. This Shigella boydii serotype 18 (strain CDC 3083-94 / BS512) protein is tRNA pseudouridine synthase D.